Reading from the N-terminus, the 33-residue chain is GFCAQKGIKCHDIHCCTNLKCVREGSNRVCRKA.

3 disulfides stabilise this stretch: C3–C16, C10–C21, and C15–C30.

Expressed by the venom gland.

It localises to the secreted. In terms of biological role, non-toxic to mice. The protein is U23-ctenitoxin-Pn1a of Phoneutria nigriventer (Brazilian armed spider).